The following is a 134-amino-acid chain: Translation initiation factor 2 subunit beta (134 aa).

Over residues 1-12 (MEYDDMLDRAME) the composition is skewed to basic and acidic residues. Positions 1-28 (MEYDDMLDRAMEETPEIDGTSERFEVPD) are disordered.

Belongs to the eIF-2-beta/eIF-5 family. As to quaternary structure, heterotrimer composed of an alpha, a beta and a gamma chain.

Its function is as follows. eIF-2 functions in the early steps of protein synthesis by forming a ternary complex with GTP and initiator tRNA. The polypeptide is Translation initiation factor 2 subunit beta (Haloarcula marismortui (strain ATCC 43049 / DSM 3752 / JCM 8966 / VKM B-1809) (Halobacterium marismortui)).